The primary structure comprises 234 residues: 2-phospho-L-lactate guanylyltransferase (234 aa).

Belongs to the CofC family. In terms of assembly, homodimer.

It catalyses the reaction (2S)-2-phospholactate + GTP + H(+) = (2S)-lactyl-2-diphospho-5'-guanosine + diphosphate. Its pathway is cofactor biosynthesis; coenzyme F420 biosynthesis. Its function is as follows. Guanylyltransferase that catalyzes the activation of (2S)-2-phospholactate (2-PL) as (2S)-lactyl-2-diphospho-5'-guanosine, via the condensation of 2-PL with GTP. It is involved in the biosynthesis of coenzyme F420, a hydride carrier cofactor. This chain is 2-phospho-L-lactate guanylyltransferase, found in Methanobrevibacter ruminantium (strain ATCC 35063 / DSM 1093 / JCM 13430 / OCM 146 / M1) (Methanobacterium ruminantium).